We begin with the raw amino-acid sequence, 159 residues long: GDP-mannose mannosyl hydrolase (159 aa).

Residues 2-3, phenylalanine 8, and arginine 36 contribute to the substrate site; that span reads FL. One can recognise a Nudix hydrolase domain in the interval 13–153; it reads RSTPLVSLDF…SRAYFLAEKR (141 aa). Residues glycine 49, glutamate 69, and glutamine 122 each coordinate Mg(2+). The Nudix box motif lies at 50–71; that stretch reads GRVQKDETLEAAFERLTMAELG.

Homodimer. The cofactor is Mg(2+).

The catalysed reaction is GDP-alpha-D-mannose + H2O = D-mannose + GDP + H(+). Hydrolyzes both GDP-mannose and GDP-glucose. Could participate in the regulation of cell wall biosynthesis by influencing the concentration of GDP-mannose or GDP-glucose in the cell. Might also be involved in the biosynthesis of the slime polysaccharide colanic acid. This Escherichia coli (strain K12) protein is GDP-mannose mannosyl hydrolase.